Reading from the N-terminus, the 359-residue chain is Peroxisome assembly protein 12 (359 aa).

Topologically, residues 1–19 (MAEHGAHFTAASVADDQPS) are peroxisomal matrix. Residues 20 to 47 (IFEVVAQDSLMTAVRPALQHVVKVLAES) form a helical membrane-spanning segment. Topologically, residues 48–51 (NPTH) are cytoplasmic. Residues 52–76 (YGFLWRWFDEIFTLLDLLLQQHYLS) form a helical membrane-spanning segment. Residues 77 to 109 (RTSASFSENFYGLKRIVMGDTHKSQRLASAGLP) are Peroxisomal matrix-facing. The helical transmembrane segment at 110 to 139 (KQQLWKSIMFLVLLPYLKVKLEKLVSSLRE) threads the bilayer. Over 140 to 144 (EDEYS) the chain is Cytoplasmic. A helical transmembrane segment spans residues 145–183 (IHPPSSRWKRFYRAFLAAYPFVNMAWEGWFLVQQLRYIL). The Peroxisomal matrix segment spans residues 184 to 249 (GKAQHHSPLL…VGGVALSLST (66 aa)). The chain crosses the membrane as a helical span at residues 250-277 (GLSVGVFFLQFLDWWYSSENQETIKSLT). Over 278–359 (ALPTPPPPVH…HLIKLYSPEN (82 aa)) the chain is Cytoplasmic. The Zn(2+) site is built by cysteine 304, cysteine 307, cysteine 325, and cysteine 328. The segment at 304–343 (CPLCRKTRVNDTVLATSGYVFCYRCVFHYVRSHQACPITG) adopts an RING-type; degenerate zinc-finger fold.

This sequence belongs to the pex2/pex10/pex12 family. Component of the PEX2-PEX10-PEX12 retrotranslocation channel, composed of PEX2, PEX10 and PEX12. Interacts with PEX19 via its cytoplasmic domain.

It is found in the peroxisome membrane. It participates in protein modification; protein ubiquitination. Component of a retrotranslocation channel required for peroxisome organization by mediating export of the PEX5 receptor from peroxisomes to the cytosol, thereby promoting PEX5 recycling. The retrotranslocation channel is composed of PEX2, PEX10 and PEX12; each subunit contributing transmembrane segments that coassemble into an open channel that specifically allows the passage of PEX5 through the peroxisomal membrane. PEX12 also regulates PEX5 recycling by activating the E3 ubiquitin-protein ligase activity of PEX10. When PEX5 recycling is compromised, PEX12 stimulates PEX10-mediated polyubiquitination of PEX5, leading to its subsequent degradation. The sequence is that of Peroxisome assembly protein 12 from Homo sapiens (Human).